Reading from the N-terminus, the 442-residue chain is Radical S-adenosyl methionine domain-containing protein 1, mitochondrial (442 aa).

A mitochondrion-targeting transit peptide spans 1-22 (MALPRSQARGWVKAAKMAQRRR). The segment at 1–37 (MALPRSQARGWVKAAKMAQRRRPADDTGGPQSPAPGS) is disordered. Residues 34–270 (APGSQRAALY…RAVLREAGFR (237 aa)) form the Radical SAM core domain. Y43 is an S-adenosyl-L-methionine binding site. Positions 49, 53, and 56 each coordinate [4Fe-4S] cluster. S-adenosyl-L-methionine is bound by residues G98, 99-100 (GT), E131, Q158, R170, and D195.

This sequence belongs to the anaerobic coproporphyrinogen-III oxidase family. HemW subfamily. The cofactor is [4Fe-4S] cluster.

The protein resides in the mitochondrion. Functionally, may be a heme chaperone, appears to bind heme. Homologous bacterial proteins do not have oxygen-independent coproporphyrinogen-III oxidase activity. Binds 1 [4Fe-4S] cluster. The cluster is coordinated with 3 cysteines and an exchangeable S-adenosyl-L-methionine. The sequence is that of Radical S-adenosyl methionine domain-containing protein 1, mitochondrial (RSAD1) from Bos taurus (Bovine).